Consider the following 348-residue polypeptide: Fe(3+) ions import ATP-binding protein FbpC (348 aa).

The 231-residue stretch at 6-236 folds into the ABC transporter domain; it reads LSLEGATVRF…PADAFVARFL (231 aa). Residue 38 to 45 participates in ATP binding; it reads GPSGSGKS.

This sequence belongs to the ABC transporter superfamily. Fe(3+) ion importer (TC 3.A.1.10) family. The complex is composed of two ATP-binding proteins (FbpC), two transmembrane proteins (FbpB) and a solute-binding protein (FbpA).

The protein localises to the cell membrane. It carries out the reaction Fe(3+)(out) + ATP + H2O = Fe(3+)(in) + ADP + phosphate + H(+). Its function is as follows. Part of the ABC transporter complex FbpABC involved in Fe(3+) ions import. Responsible for energy coupling to the transport system. This chain is Fe(3+) ions import ATP-binding protein FbpC, found in Streptomyces coelicolor (strain ATCC BAA-471 / A3(2) / M145).